The sequence spans 332 residues: Heptahelical transmembrane protein 1 (332 aa).

Residues 1–52 form a disordered region; sequence MDQNGHNDEAETVSCGNGNCKSKIVPGDDHGGDESSGTKRRKKRKTQQKTMK. Over 1–98 the chain is Cytoplasmic; sequence MDQNGHNDEA…VFSFHNESLN (98 aa). The segment covering 26–37 has biased composition (basic and acidic residues); that stretch reads PGDDHGGDESSG. The span at 38–52 shows a compositional bias: basic residues; sequence TKRRKKRKTQQKTMK. Residues 99-119 form a helical membrane-spanning segment; that stretch reads VWTHLIGFIFFVALTVANIIH. At 120–138 the chain is on the extracellular side; the sequence is HDGFFPVDAKSPGNVTRWP. The chain crosses the membrane as a helical span at residues 139 to 159; it reads FFVFLGGSMFCLLASSICHLF. Topologically, residues 160 to 172 are cytoplasmic; the sequence is CCHSKELNVFLLR. Residues 173-193 form a helical membrane-spanning segment; sequence IDYAGITAMIITSFFPPIFYI. Residues 194 to 199 are Extracellular-facing; that stretch reads FQCTPR. Residues 200-220 form a helical membrane-spanning segment; sequence WYFIYLAGITSMGIFTIITLF. The Cytoplasmic segment spans residues 221–233; sequence TPSLSAPKYRAFR. The chain crosses the membrane as a helical span at residues 234-254; sequence ALLFASMGLFGIVPAAHALVV. Residues 255-262 are Extracellular-facing; that stretch reads NWGNPQRN. The chain crosses the membrane as a helical span at residues 263–283; it reads VTLVYELLMAVFYLVGTGFYV. The Cytoplasmic segment spans residues 284–303; the sequence is GRVPERLKPGWFDRVGHSHQ. The chain crosses the membrane as a helical span at residues 304 to 324; it reads IFHVFVLLGALSHYAAALLFL. Over 325–332 the chain is Extracellular; the sequence is DWRDHVGC.

The protein belongs to the ADIPOR family. In terms of assembly, interacts (via N-terminus) with SCRM/ICE1. In terms of tissue distribution, expressed in roots, hypocotyls, vasculature of cotyledons and leaves, hydathodes and guard cells. In reproductive organs, expressed in trichomes, veins of sepals, stamens and stigmata of pistils.

The protein localises to the membrane. In terms of biological role, may act as a negative regulator of abscisic acid (ABA)-mediated osmotic stress signaling and function in cross-talk between cold and osmotic signaling. This is Heptahelical transmembrane protein 1 (HHP1) from Arabidopsis thaliana (Mouse-ear cress).